Consider the following 533-residue polypeptide: Histone-arginine methyltransferase CARMER (533 aa).

Residues 143–452 (ASQYFQFYGY…QSYDVTIDLH (310 aa)) enclose the SAM-dependent MTase PRMT-type domain. 6 residues coordinate S-adenosyl-L-methionine: Gln156, Arg165, Gly189, Glu211, Glu240, and Thr268. Asymmetric dimethylarginine; by autocatalysis is present on Arg503.

The protein belongs to the class I-like SAM-binding methyltransferase superfamily. Protein arginine N-methyltransferase family. As to quaternary structure, homodimer. Post-translationally, the dimethylated protein is the major form.

It is found in the cytoplasm. The protein localises to the nucleus. It catalyses the reaction L-arginyl-[protein] + 2 S-adenosyl-L-methionine = N(omega),N(omega)-dimethyl-L-arginyl-[protein] + 2 S-adenosyl-L-homocysteine + 2 H(+). In terms of biological role, methylates (mono- and asymmetric dimethylation) the guanidino nitrogens of arginyl residues in proteins. May methylate histone H3 at 'Arg-17' and activate transcription via chromatin remodeling. The protein is Histone-arginine methyltransferase CARMER (Art4) of Drosophila willistoni (Fruit fly).